Here is a 257-residue protein sequence, read N- to C-terminus: Glutamate racemase (257 aa).

Substrate-binding positions include 12–13 (DS) and 44–45 (YG). Catalysis depends on Cys-75, which acts as the Proton donor/acceptor. 76–77 (NT) is a binding site for substrate. Cys-185 serves as the catalytic Proton donor/acceptor. Residue 186 to 187 (TH) coordinates substrate.

It belongs to the aspartate/glutamate racemases family.

The catalysed reaction is L-glutamate = D-glutamate. It participates in cell wall biogenesis; peptidoglycan biosynthesis. Provides the (R)-glutamate required for cell wall biosynthesis. This is Glutamate racemase from Clostridium botulinum (strain Okra / Type B1).